Reading from the N-terminus, the 135-residue chain is Ribosome-binding factor A (135 aa).

This sequence belongs to the RbfA family. In terms of assembly, monomer. Binds 30S ribosomal subunits, but not 50S ribosomal subunits or 70S ribosomes.

It localises to the cytoplasm. Functionally, one of several proteins that assist in the late maturation steps of the functional core of the 30S ribosomal subunit. Associates with free 30S ribosomal subunits (but not with 30S subunits that are part of 70S ribosomes or polysomes). Required for efficient processing of 16S rRNA. May interact with the 5'-terminal helix region of 16S rRNA. This is Ribosome-binding factor A from Dinoroseobacter shibae (strain DSM 16493 / NCIMB 14021 / DFL 12).